A 510-amino-acid chain; its full sequence is MIWHVQNENFILDSTRIFMKAFHLLLFDGSLIFPECILIFGLILLLMIDSTSDQKDIPWLYFISSTSLVMSITALLFRWREEPMISFSGNFQTNNFNEIFQFLILLCSTLCIPLSVEYIECTEMAITEFLLFILTATLGGMFLCGANDLITIFVAPECFSLCSYLLSGYTKKDVRSNEATTKYLLMGGASSSILVHGFSWLYGSSGGEIELQEIVNGLINTQMYNSPGISIALIFITVGIGFKLSPAPSHQWTPDVYEGSPTPVVAFLSVTSKVAASASATRIFDIPFYFSSNEWHLLLEILAILSMILGNLIAITQTSMKRMLAYSSIGQIGYVIIGIIVGDSNGGYASMITYMLFYISMNLGTFACIVSFGLRTGTDNIRDYAGLYTKDPFLALSLALCLLSLGGLPPLAGFFGKLHLFWCGWQAGLYFLVSIGLLTSVLSIYYYLKIIKLLMTGRNQEITPHVRNYRRSPLRSNNSIELSMIVCVIASTIPGISMNPIIAIAQDTLF.

The next 13 helical transmembrane spans lie at 24 to 44, 57 to 77, 99 to 119, 124 to 144, 149 to 169, 183 to 203, 227 to 247, 295 to 315, 323 to 343, 354 to 374, 395 to 415, 418 to 438, and 484 to 504; these read LLLFDGSLIFPECILIFGLIL, IPWLYFISSTSLVMSITALLF, IFQFLILLCSTLCIPLSVEYI, MAITEFLLFILTATLGGMFLC, LITIFVAPECFSLCSYLLSGY, YLLMGGASSSILVHGFSWLYG, PGISIALIFITVGIGFKLSPA, WHLLLEILAILSMILGNLIAI, MLAYSSIGQIGYVIIGIIVGD, YMLFYISMNLGTFACIVSFGL, ALSLALCLLSLGGLPPLAGFF, LHLFWCGWQAGLYFLVSIGLL, and MIVCVIASTIPGISMNPIIAI.

Belongs to the complex I subunit 2 family. As to quaternary structure, NDH is composed of at least 16 different subunits, 5 of which are encoded in the nucleus.

The protein localises to the plastid. Its subcellular location is the chloroplast thylakoid membrane. It carries out the reaction a plastoquinone + NADH + (n+1) H(+)(in) = a plastoquinol + NAD(+) + n H(+)(out). It catalyses the reaction a plastoquinone + NADPH + (n+1) H(+)(in) = a plastoquinol + NADP(+) + n H(+)(out). Its function is as follows. NDH shuttles electrons from NAD(P)H:plastoquinone, via FMN and iron-sulfur (Fe-S) centers, to quinones in the photosynthetic chain and possibly in a chloroplast respiratory chain. The immediate electron acceptor for the enzyme in this species is believed to be plastoquinone. Couples the redox reaction to proton translocation, and thus conserves the redox energy in a proton gradient. This is NAD(P)H-quinone oxidoreductase subunit 2 A, chloroplastic from Carica papaya (Papaya).